Here is a 175-residue protein sequence, read N- to C-terminus: Cytochrome c-550-like protein (175 aa).

Residues 1–34 (MYQPHFWQRSIGWLCGGLLILLLGWTIAPATALA) form the signal peptide. The heme c site is built by C81, C84, H85, and C135.

The protein belongs to the cytochrome c family. PsbV subfamily. Heme c serves as cofactor.

Its subcellular location is the cellular thylakoid membrane. Functionally, probable low-potential cytochrome c, can partially replace cytochrome c-550 (PsbV) function. The protein is Cytochrome c-550-like protein of Thermosynechococcus vestitus (strain NIES-2133 / IAM M-273 / BP-1).